The following is a 145-amino-acid chain: Cell wall teichoic acid glycosylation protein GtcA (145 aa).

Helical transmembrane passes span 21-41, 45-65, 91-111, and 122-142; these read IFMYLIMGGFTTIINIVTFWL, ILNWDYRIANTIAFIASVLFA, FFGFRCLTYIIDILVMILLIS, and IWTNIIVLVLNYVFSKWIIFK.

Belongs to the GtrA family.

The protein resides in the cell membrane. In terms of biological role, involved in the decoration of cell wall teichoic acid with galactose and glucose. In Listeria monocytogenes, this protein is Cell wall teichoic acid glycosylation protein GtcA (gtcA).